The following is an 837-amino-acid chain: Striatin-interacting protein 1 (837 aa).

M1 carries the post-translational modification N-acetylmethionine. 2 disordered regions span residues 1–66 (MEPA…SESP) and 333–423 (AASP…KGLP). Residues 18–35 (PQPPPPPPPATAQPPPGA) are compositionally biased toward pro residues. A compositionally biased stretch (basic and acidic residues) spans 47 to 60 (KAREFNRNQRKDSE). 3 positions are modified to phosphoserine: S59, S335, and S339. Residues 356-377 (KALIKQDNLDAFNERDPYKADD) are compositionally biased toward basic and acidic residues. Positions 378-391 (SREEEEENDDDNSL) are enriched in acidic residues. Phosphoserine is present on S788. Residues 796–837 (DNCLQSVLGQRVDLPEDFQMNYDLWLEREVFSKPISWEELLQ) are required for STRIPAK core complex formation.

The protein belongs to the STRIP family. As to quaternary structure, part of the core of STRIPAK complexes composed of PP2A catalytic and scaffolding subunits, the striatins (PP2A regulatory subunits), the striatin-associated proteins MOB4, STRIP1 and STRIP2, PDCD10 and members of the STE20 kinases, such as STK24 and STK26. The STRIPAK complex can be extended by adapter proteins such as SLMAP:SIKE1, CTTNBP2 or CTTNBP2NL. Interacts with CDC42BPB. Interacts with CTTNBP2NL.

Its subcellular location is the cytoplasm. Its function is as follows. Plays a role in the regulation of cell morphology and cytoskeletal organization. Required in the cortical actin filament dynamics and cell shape. Part of the striatin-interacting phosphatase and kinase (STRIPAK) complexes. STRIPAK complexes have critical roles in protein (de)phosphorylation and are regulators of multiple signaling pathways including Hippo, MAPK, nuclear receptor and cytoskeleton remodeling. Different types of STRIPAK complexes are involved in a variety of biological processes such as cell growth, differentiation, apoptosis, metabolism and immune regulation. In Macaca fascicularis (Crab-eating macaque), this protein is Striatin-interacting protein 1 (STRIP1).